A 441-amino-acid polypeptide reads, in one-letter code: Divalent metal cation transporter MntH (441 aa).

A run of 11 helical transmembrane segments spans residues 41–61, 74–94, 116–136, 141–161, 183–203, 223–243, 271–291, 311–331, 360–380, 381–401, and 419–439; these read TGIAALLPFVGPAVIASIGYM, AAYGYRLLWVVLAANAIAMLF, HFPAPIVWGMWIASEIAAMAT, FLGGALAFALLCHLPLFAGMI, AAIAALVGVIGACYLGELMIA, AALTIAVGIIGATIMPHTLYL, VVVALGLAGFVNLAMVMMAAS, IPVLGPAAGVLFLVALLTSGV, AVTIAPAFAVVACGCDVTRAM, VASQVVLSFVLPMPMIALLIL, and IVAGTATVVIVGLNAYLVWAA.

Belongs to the NRAMP family.

It localises to the cell inner membrane. Its function is as follows. H(+)-stimulated, divalent metal cation uptake system. This Burkholderia ambifaria (strain ATCC BAA-244 / DSM 16087 / CCUG 44356 / LMG 19182 / AMMD) (Burkholderia cepacia (strain AMMD)) protein is Divalent metal cation transporter MntH.